The primary structure comprises 255 residues: Thiazole synthase (255 aa).

K96 functions as the Schiff-base intermediate with DXP in the catalytic mechanism. Residues G157, 183 to 184, and 205 to 206 each bind 1-deoxy-D-xylulose 5-phosphate; these read AG and NT.

The protein belongs to the ThiG family. Homotetramer. Forms heterodimers with either ThiH or ThiS.

The protein localises to the cytoplasm. The catalysed reaction is [ThiS sulfur-carrier protein]-C-terminal-Gly-aminoethanethioate + 2-iminoacetate + 1-deoxy-D-xylulose 5-phosphate = [ThiS sulfur-carrier protein]-C-terminal Gly-Gly + 2-[(2R,5Z)-2-carboxy-4-methylthiazol-5(2H)-ylidene]ethyl phosphate + 2 H2O + H(+). Its pathway is cofactor biosynthesis; thiamine diphosphate biosynthesis. Its function is as follows. Catalyzes the rearrangement of 1-deoxy-D-xylulose 5-phosphate (DXP) to produce the thiazole phosphate moiety of thiamine. Sulfur is provided by the thiocarboxylate moiety of the carrier protein ThiS. In vitro, sulfur can be provided by H(2)S. The protein is Thiazole synthase of Heliobacterium modesticaldum (strain ATCC 51547 / Ice1).